Reading from the N-terminus, the 735-residue chain is NAD(P)H-quinone oxidoreductase subunit 5, chloroplastic (735 aa).

A run of 16 helical transmembrane segments spans residues W9–F29, W40–I60, I89–I109, F125–I145, I147–T167, I184–E204, N219–A239, T258–A278, L280–I300, L327–I347, A354–S374, I396–S416, W425–Y445, L540–F560, F600–Y620, and F714–L734.

It belongs to the complex I subunit 5 family. In terms of assembly, NDH is composed of at least 16 different subunits, 5 of which are encoded in the nucleus.

Its subcellular location is the plastid. The protein resides in the chloroplast thylakoid membrane. It catalyses the reaction a plastoquinone + NADH + (n+1) H(+)(in) = a plastoquinol + NAD(+) + n H(+)(out). The catalysed reaction is a plastoquinone + NADPH + (n+1) H(+)(in) = a plastoquinol + NADP(+) + n H(+)(out). NDH shuttles electrons from NAD(P)H:plastoquinone, via FMN and iron-sulfur (Fe-S) centers, to quinones in the photosynthetic chain and possibly in a chloroplast respiratory chain. The immediate electron acceptor for the enzyme in this species is believed to be plastoquinone. Couples the redox reaction to proton translocation, and thus conserves the redox energy in a proton gradient. This is NAD(P)H-quinone oxidoreductase subunit 5, chloroplastic (ndhF) from Gossypium hirsutum (Upland cotton).